We begin with the raw amino-acid sequence, 431 residues long: Saglin (431 aa).

The signal sequence occupies residues 1–39 (MSVRDYSGVQVISSRKHRSMSRLPTVLLLLASAAVLAAG). The N-linked (GlcNAc...) asparagine glycan is linked to Asn-95. Positions 120-169 (LDDAQRQMEQEHRQYAATLEEQLHAAQQETQQEQEMKKALQKQLDALTDS) form a coiled coil.

Homodimer. In terms of tissue distribution, female salivary gland (at protein level). Not detected in female carcass without salivary glands, midgut and hemolymph (at protein level). Probably not expressed in male tissues.

It is found in the secreted. Functionally, (Microbial infection) Facilitates efficient midgut colonization by Plasmodium berghei parasites. Promotes successful transmission of Plasmodium berghei at low infection densities. Its function is as follows. (Microbial infection) Facilitates efficient midgut colonization by Plasmodium falciparum. This Anopheles coluzzii (African malaria mosquito) protein is Saglin.